Here is a 78-residue protein sequence, read N- to C-terminus: DNA-directed RNA polymerase subunit Rpo5 (78 aa).

It belongs to the archaeal Rpo5/eukaryotic RPB5 RNA polymerase subunit family. As to quaternary structure, part of the RNA polymerase complex.

Its subcellular location is the cytoplasm. It catalyses the reaction RNA(n) + a ribonucleoside 5'-triphosphate = RNA(n+1) + diphosphate. DNA-dependent RNA polymerase (RNAP) catalyzes the transcription of DNA into RNA using the four ribonucleoside triphosphates as substrates. The protein is DNA-directed RNA polymerase subunit Rpo5 of Methanocaldococcus jannaschii (strain ATCC 43067 / DSM 2661 / JAL-1 / JCM 10045 / NBRC 100440) (Methanococcus jannaschii).